Here is a 442-residue protein sequence, read N- to C-terminus: Lipoyl synthase, apicoplast (442 aa).

The N-terminal stretch at 1–25 (MHVLTPSLYIYAFFIVCVRLKCGRS) is a signal peptide. Residues 92 to 154 (LLRSESATDE…EKKPDWFHVP (63 aa)) form a disordered region. Basic and acidic residues predominate over residues 109–127 (LKEKLKESPANWGKDKQEE). [4Fe-4S] cluster-binding residues include C177, C182, C188, C203, C207, C210, and S418. One can recognise a Radical SAM core domain in the interval 189-407 (WNIGTATIML…KEEGMKMGFK (219 aa)).

Belongs to the radical SAM superfamily. Lipoyl synthase family. [4Fe-4S] cluster serves as cofactor.

It is found in the plastid. It localises to the apicoplast. The enzyme catalyses [[Fe-S] cluster scaffold protein carrying a second [4Fe-4S](2+) cluster] + N(6)-octanoyl-L-lysyl-[protein] + 2 oxidized [2Fe-2S]-[ferredoxin] + 2 S-adenosyl-L-methionine + 4 H(+) = [[Fe-S] cluster scaffold protein] + N(6)-[(R)-dihydrolipoyl]-L-lysyl-[protein] + 4 Fe(3+) + 2 hydrogen sulfide + 2 5'-deoxyadenosine + 2 L-methionine + 2 reduced [2Fe-2S]-[ferredoxin]. It functions in the pathway protein modification; protein lipoylation via endogenous pathway; protein N(6)-(lipoyl)lysine from octanoyl-[acyl-carrier-protein]: step 2/2. Its function is as follows. Catalyzes the radical-mediated insertion of two sulfur atoms into the C-6 and C-8 positions of the octanoyl moiety bound to the lipoyl domains of lipoate-dependent enzymes, thereby converting the octanoylated domains into lipoylated derivatives. This chain is Lipoyl synthase, apicoplast, found in Plasmodium vivax (strain Salvador I).